Here is a 209-residue protein sequence, read N- to C-terminus: Uracil phosphoribosyltransferase (209 aa).

5-phospho-alpha-D-ribose 1-diphosphate contacts are provided by residues Arg79, Arg104, and 131 to 139 (DPMLATGGS). Uracil-binding positions include Ile194 and 199–201 (GDA). A 5-phospho-alpha-D-ribose 1-diphosphate-binding site is contributed by Asp200.

It belongs to the UPRTase family. Mg(2+) is required as a cofactor.

It catalyses the reaction UMP + diphosphate = 5-phospho-alpha-D-ribose 1-diphosphate + uracil. It participates in pyrimidine metabolism; UMP biosynthesis via salvage pathway; UMP from uracil: step 1/1. Allosterically activated by GTP. In terms of biological role, catalyzes the conversion of uracil and 5-phospho-alpha-D-ribose 1-diphosphate (PRPP) to UMP and diphosphate. The polypeptide is Uracil phosphoribosyltransferase (Exiguobacterium sibiricum (strain DSM 17290 / CCUG 55495 / CIP 109462 / JCM 13490 / 255-15)).